The following is a 169-amino-acid chain: Ribosome maturation factor RimM (169 aa).

The 75-residue stretch at 94-168 folds into the PRC barrel domain; that stretch reads DDEFYHADLI…RIVADPPEGL (75 aa).

It belongs to the RimM family. Binds ribosomal protein uS19.

It localises to the cytoplasm. Functionally, an accessory protein needed during the final step in the assembly of 30S ribosomal subunit, possibly for assembly of the head region. Essential for efficient processing of 16S rRNA. May be needed both before and after RbfA during the maturation of 16S rRNA. It has affinity for free ribosomal 30S subunits but not for 70S ribosomes. The protein is Ribosome maturation factor RimM of Cereibacter sphaeroides (strain ATCC 17023 / DSM 158 / JCM 6121 / CCUG 31486 / LMG 2827 / NBRC 12203 / NCIMB 8253 / ATH 2.4.1.) (Rhodobacter sphaeroides).